A 592-amino-acid chain; its full sequence is MPATQQMSRLVDSPDGVRIAVYHEGNPDGPTVVLVHGFPDSHVLWDGVVPLLAERFRIVRYDNRGVGRSSVPKPISAYTMAHFADDFDAVIGELSPGEPVHVLAHDWGSVGVWEYLRRPGASDRVASFTSVSGPSQDHLVNYVYGGLRRPWRPRTFLRAISQTLRLSYMALFSVPVVAPLLLRVALSSAAVRRNMVGDIPVDQIHHSETLARDAAHSVKTYPANYFRSFSSSRRGRAIPIVDVPVQLIVNSQDPYVRPYGYDQTARWVPRLWRRDIKAGHFSPMSHPQVMAAAVHDFADLADGKQPSRALLRAQVGRPRGYFGDTLVSVTGAGSGIGRETALAFAREGAEIVISDIDEATVKDTAAEIAARGGIAYPYVLDVSDAEAVEAFAERVSAEHGVPDIVVNNAGIGQAGRFLDTPAEQFDRVLAVNLGGVVNGCRAFGQRLVERGTGGHIVNVSSMAAYAPLQSLSAYCTSKAATYMFSDCLRAELDAAGVGLTTICPGVIDTNIVATTGFHAPGTDEEKIDGRRGQIDKMFALRSYGPDKVADAIVSAVKKKKPIRPVAPEAYALYGISRVLPQALRSTARLRVI.

Positions 30–286 (PTVVLVHGFP…KAGHFSPMSH (257 aa)) constitute an AB hydrolase-1 domain. Substrate is bound at residue Ser461. Tyr474 (proton acceptor) is an active-site residue.

It belongs to the short-chain dehydrogenases/reductases (SDR) family.

The polypeptide is Probable oxidoreductase EphD (ephD) (Mycobacterium bovis (strain ATCC BAA-935 / AF2122/97)).